Here is a 491-residue protein sequence, read N- to C-terminus: Glutamyl-tRNA(Gln) amidotransferase subunit A (491 aa).

Catalysis depends on charge relay system residues Lys-79 and Ser-154. The active-site Acyl-ester intermediate is the Ser-178.

This sequence belongs to the amidase family. GatA subfamily. As to quaternary structure, heterotrimer of A, B and C subunits.

The enzyme catalyses L-glutamyl-tRNA(Gln) + L-glutamine + ATP + H2O = L-glutaminyl-tRNA(Gln) + L-glutamate + ADP + phosphate + H(+). Functionally, allows the formation of correctly charged Gln-tRNA(Gln) through the transamidation of misacylated Glu-tRNA(Gln) in organisms which lack glutaminyl-tRNA synthetase. The reaction takes place in the presence of glutamine and ATP through an activated gamma-phospho-Glu-tRNA(Gln). In Alkaliphilus metalliredigens (strain QYMF), this protein is Glutamyl-tRNA(Gln) amidotransferase subunit A.